A 439-amino-acid polypeptide reads, in one-letter code: Sex-determination protein fem-3 (439 aa).

The segment at 21–45 is disordered; that stretch reads RRLKRKANDDDDDDETVRERVDDAE.

In terms of assembly, component of a complex containing fem-1, fem-2 and fem-3. Interacts with fem-1 and fem-2 (via N-terminus). Part of a E3 ubiquitin-protein ligase complex, at least composed of cul-2, elc-1, tra-1, fem-1, fem-2 and fem-3; mediates the ubiquitination and subsequent proteasomal degradation of tra-1. Interacts with tra-1. Interacts with sel-10. Interacts with tra-2.

Functionally, required for male development. In XO (male) animals, fem-3 directs male differentiation in all tissues. In XX (hermaphrodite) animals, it specifies the first 80 or so germ cells to be sperm. Negatively regulates male development when bound to tra-2. Together with fem-2 associates with the CBC(fem-1) E3 ubiquitin-protein ligase complex which mediates the ubiquitination and subsequent proteasomal degradation of tra-1. The polypeptide is Sex-determination protein fem-3 (Caenorhabditis remanei (Caenorhabditis vulgaris)).